The primary structure comprises 212 residues: Probable GTP-binding protein EngB (212 aa).

The 173-residue stretch at 38-210 (SLPEIAFVGK…KASLAKCIKF (173 aa)) folds into the EngB-type G domain. GTP is bound by residues 46 to 53 (GKSNVGKS), 73 to 77 (GRTRQ), 91 to 94 (DLPG), 158 to 161 (TKSD), and 189 to 191 (VSN). Mg(2+) is bound by residues serine 53 and threonine 75.

This sequence belongs to the TRAFAC class TrmE-Era-EngA-EngB-Septin-like GTPase superfamily. EngB GTPase family. Mg(2+) is required as a cofactor.

Functionally, necessary for normal cell division and for the maintenance of normal septation. This is Probable GTP-binding protein EngB from Rickettsia rickettsii (strain Sheila Smith).